Here is a 58-residue protein sequence, read N- to C-terminus: ATP synthase F(0) complex subunit k, mitochondrial (58 aa).

N6-acetyllysine; partial is present on residues Lys16 and Lys17. The chain crosses the membrane as a helical span at residues 23 to 45 (TLTGRMNCVLATYGSIALIVLYF).

In terms of assembly, component of the ATP synthase complex composed at least of ATP5F1A/subunit alpha, ATP5F1B/subunit beta, ATP5MC1/subunit c (homooctomer), MT-ATP6/subunit a, MT-ATP8/subunit 8, ATP5ME/subunit e, ATP5MF/subunit f, ATP5MG/subunit g, ATP5MK/subunit k, ATP5MJ/subunit j, ATP5F1C/subunit gamma, ATP5F1D/subunit delta, ATP5F1E/subunit epsilon, ATP5PF/subunit F6, ATP5PB/subunit b, ATP5PD/subunit d, ATP5PO/subunit OSCP. ATP synthase complex consists of a soluble F(1) head domain (subunits alpha(3) and beta(3)) - the catalytic core - and a membrane F(0) domain - the membrane proton channel (subunits c, a, 8, e, f, g, k and j). These two domains are linked by a central stalk (subunits gamma, delta, and epsilon) rotating inside the F1 region and a stationary peripheral stalk (subunits F6, b, d, and OSCP). The ATP synthase complex/complex V exists as a monomeric and a dimeric supercomplex that helps shape mitochondrial cristae to optimize proton flow.

The protein resides in the mitochondrion membrane. Its function is as follows. Subunit k, of the mitochondrial membrane ATP synthase complex (F(1)F(0) ATP synthase or Complex V) that produces ATP from ADP in the presence of a proton gradient across the membrane which is generated by electron transport complexes of the respiratory chain. ATP synthase complex consist of a soluble F(1) head domain - the catalytic core - and a membrane F(1) domain - the membrane proton channel. These two domains are linked by a central stalk rotating inside the F(1) region and a stationary peripheral stalk. During catalysis, ATP synthesis in the catalytic domain of F(1) is coupled via a rotary mechanism of the central stalk subunits to proton translocation. In vivo, can only synthesize ATP although its ATP hydrolase activity can be activated artificially in vitro. Part of the complex F(0) domain. Required for dimerization of the ATP synthase complex and as such regulates ATP synthesis in the mitochondria. The polypeptide is ATP synthase F(0) complex subunit k, mitochondrial (Bos taurus (Bovine)).